Reading from the N-terminus, the 90-residue chain is DNA-binding protein HU-beta (90 aa).

Belongs to the bacterial histone-like protein family. In terms of assembly, heterodimer of an alpha and a beta chain.

Functionally, histone-like DNA-binding protein which is capable of wrapping DNA to stabilize it, and thus to prevent its denaturation under extreme environmental conditions. The chain is DNA-binding protein HU-beta (hupB) from Salmonella typhi.